An 836-amino-acid polypeptide reads, in one-letter code: Eukaryotic translation initiation factor 3 subunit C (836 aa).

The segment at Met-1–Lys-97 is disordered. Acidic residues predominate over residues Ser-13–Asp-55. Positions Glu-86 to Lys-97 are enriched in basic and acidic residues. The PCI domain maps to Phe-586–His-761. The tract at residues Asp-783–Asn-817 is disordered. A compositionally biased stretch (low complexity) spans Thr-797 to Gln-806. The span at Lys-807 to Asn-817 shows a compositional bias: basic and acidic residues.

This sequence belongs to the eIF-3 subunit C family. In terms of assembly, component of the eukaryotic translation initiation factor 3 (eIF-3) complex.

It localises to the cytoplasm. In terms of biological role, component of the eukaryotic translation initiation factor 3 (eIF-3) complex, which is involved in protein synthesis of a specialized repertoire of mRNAs and, together with other initiation factors, stimulates binding of mRNA and methionyl-tRNAi to the 40S ribosome. The eIF-3 complex specifically targets and initiates translation of a subset of mRNAs involved in cell proliferation. This chain is Eukaryotic translation initiation factor 3 subunit C, found in Meyerozyma guilliermondii (strain ATCC 6260 / CBS 566 / DSM 6381 / JCM 1539 / NBRC 10279 / NRRL Y-324) (Yeast).